Consider the following 629-residue polypeptide: Solute carrier family 22 member 14 (629 aa).

The disordered stretch occupies residues 1-21 (MKEDQNYKTAFGSQNSRDTHR). At 1–67 (MKEDQNYKTA…IGEFGTFQWR (67 aa)) the chain is on the cytoplasmic side. Positions 7–16 (YKTAFGSQNS) are enriched in polar residues. Residues 68 to 88 (LVVLTFIPSILSTFFIFSHHF) traverse the membrane as a helical segment. At 89-183 (LLTAQRPYCN…LVCGNEPNKE (95 aa)) the chain is on the extracellular side. Residues Asn98, Asn116, Asn124, and Asn149 are each glycosylated (N-linked (GlcNAc...) asparagine). Residues 184-204 (NGLTVFLSGVLTGSLLFGFLS) traverse the membrane as a helical segment. Over 205-209 (DKLGR) the chain is Cytoplasmic. The chain crosses the membrane as a helical span at residues 210–230 (YPIILLSLLGFLIFGFGTAFV). Over 231–240 (SSFYQYLFFR) the chain is Extracellular. Residues 241–261 (FFVAQASVGYAICSVSLVMEW) traverse the membrane as a helical segment. The Cytoplasmic segment spans residues 262-269 (LVGEHRAQ). A helical transmembrane segment spans residues 270–290 (AVILQHSFLTIGVILLTGLAY). Residues 291–295 (KVVHW) are Extracellular-facing. Residues 296–316 (RLLCLLGGMPMFPLICNIWVL) traverse the membrane as a helical segment. Topologically, residues 317–378 (RESPRWLMVR…DFCTNQHLFK (62 aa)) are cytoplasmic. Residues 379–399 (VVLAIGCVWFTVSYISFTLNL) traverse the membrane as a helical segment. Residues 400-409 (KMNDFGLDVY) lie on the Extracellular side of the membrane. The chain crosses the membrane as a helical span at residues 410–430 (FVQMVRSIVAVPARLCCIILL). Over 431-436 (EYFGRK) the chain is Cytoplasmic. A helical transmembrane segment spans residues 437-457 (WALNLTLFLVTSMCLFLLFLP). Residues 458–463 (QEPKST) lie on the Extracellular side of the membrane. Residues 464–484 (IILTLMLAEFSMAGTLSIFFI) traverse the membrane as a helical segment. Over 485–496 (YTAELLPTVLRS) the chain is Cytoplasmic. A helical membrane pass occupies residues 497–517 (TGLGMVSLAWVAGAISSVAIF). Topologically, residues 518–523 (KQTKTQ) are extracellular. The helical transmembrane segment at 524 to 544 (LPIFFCCLCCVLALCFSSLVP) threads the bilayer. Residues 545–629 (ETGSQSLRDS…PVQSLKAQPP (85 aa)) lie on the Cytoplasmic side of the membrane.

It belongs to the major facilitator (TC 2.A.1) superfamily. Organic cation transporter (TC 2.A.1.19) family. Testis-specific (at protein level). Specifically expressed in male germ cells (at protein level).

The protein localises to the mitochondrion inner membrane. The protein resides in the cell projection. It is found in the cilium. Its subcellular location is the flagellum membrane. It carries out the reaction riboflavin(in) = riboflavin(out). In terms of biological role, riboflavin transporter localized at the inner mitochondrial membrane of the spermatozoa midpiece, which is required for male fertility. SLC22A14-mediated riboflavin transport is essential for spermatozoa energy generation and motility: riboflavin is the precursor of FMN and FAD, which are coenzymes of many enzymes in the TCA cycle (the citric acid cycle) in mitochondria. Required for sperm motility and normal sperm flagellar structure. This Mus musculus (Mouse) protein is Solute carrier family 22 member 14.